A 478-amino-acid chain; its full sequence is Bifunctional protein HldE (478 aa).

Positions 1-318 (MKVTLPDFRQ…ENAIRGRADT (318 aa)) are ribokinase. Residue 195-198 (NLSE) participates in ATP binding. D264 is an active-site residue. Residues 344-478 (MTNGCFDILH…NTIKANASKS (135 aa)) form a cytidylyltransferase region.

This sequence in the N-terminal section; belongs to the carbohydrate kinase PfkB family. In the C-terminal section; belongs to the cytidylyltransferase family. As to quaternary structure, homodimer.

It carries out the reaction D-glycero-beta-D-manno-heptose 7-phosphate + ATP = D-glycero-beta-D-manno-heptose 1,7-bisphosphate + ADP + H(+). The enzyme catalyses D-glycero-beta-D-manno-heptose 1-phosphate + ATP + H(+) = ADP-D-glycero-beta-D-manno-heptose + diphosphate. The protein operates within nucleotide-sugar biosynthesis; ADP-L-glycero-beta-D-manno-heptose biosynthesis; ADP-L-glycero-beta-D-manno-heptose from D-glycero-beta-D-manno-heptose 7-phosphate: step 1/4. Its pathway is nucleotide-sugar biosynthesis; ADP-L-glycero-beta-D-manno-heptose biosynthesis; ADP-L-glycero-beta-D-manno-heptose from D-glycero-beta-D-manno-heptose 7-phosphate: step 3/4. Its function is as follows. Catalyzes the phosphorylation of D-glycero-D-manno-heptose 7-phosphate at the C-1 position to selectively form D-glycero-beta-D-manno-heptose-1,7-bisphosphate. Functionally, catalyzes the ADP transfer from ATP to D-glycero-beta-D-manno-heptose 1-phosphate, yielding ADP-D-glycero-beta-D-manno-heptose. This chain is Bifunctional protein HldE, found in Pectobacterium carotovorum subsp. carotovorum (strain PC1).